Reading from the N-terminus, the 591-residue chain is PDZ and LIM domain protein 5 (591 aa).

Position 2 is an N-acetylserine (Ser-2). Position 2 is a phosphoserine (Ser-2). Residues 2 to 85 (SNYSVSLVGP…SLNMTLQRAS (84 aa)) enclose the PDZ domain. Lys-89 carries the N6-acetyllysine; alternate modification. Residue Lys-89 is modified to N6-succinyllysine; alternate. Lys-89 is covalently cross-linked (Glycyl lysine isopeptide (Lys-Gly) (interchain with G-Cter in SUMO2); alternate). 5 positions are modified to phosphoserine: Glu-102, Lys-105, Ser-111, Ser-134, and Ser-137. Disordered regions lie at residues 121–166 (TNMA…PTPV) and 186–398 (SADQ…DQDT). The span at 134–143 (SVSSPKVTSI) shows a compositional bias: polar residues. A compositionally biased stretch (low complexity) spans 144 to 166 (PSPSSAFTPAHAATSSHASPTPV). Polar residues-rich tracts occupy residues 186–195 (SADQCSSPPN) and 205–217 (RQPT…SESA). 3 positions are modified to phosphoserine: Gln-218, Ser-228, and Ser-260. 2 stretches are compositionally biased toward basic and acidic residues: residues 258–273 (DASK…DWRP) and 294–304 (HLTESENDNTK). Residues 310-339 (QEPSQQPASSGASPLSASEGPESPGSSRPS) are compositionally biased toward low complexity. Phosphoserine is present on residues Ser-313, Pro-316, and Ser-322. Lys-350 bears the N6-acetyllysine mark. The segment covering 353–385 (GSTSVKSPSWQRPNQAAPSTGRISNNARSSGTG) has biased composition (polar residues). Phosphoserine is present on residues Ser-359 and Ser-361. LIM zinc-binding domains lie at 413–472 (PMCA…FFAP), 472–531 (PECG…LFGT), and 531–591 (TICR…SVNF).

Interacts with various PKC isoforms through the LIM domains. Interacts with actin and alpha-actinin through the PDZ domain. Interacts (via LIM domains) with SIPA1L1/SPAR; this interaction may occur preferentially with isoform 1.

The protein resides in the postsynaptic density. It localises to the presynapse. Its subcellular location is the postsynapse. The protein localises to the cytoplasm. It is found in the cytosol. In terms of biological role, may play an important role in the heart development by scaffolding PKC to the Z-disk region. May play a role in the regulation of cardiomyocyte expansion. Isoforms lacking the LIM domains may negatively modulate the scaffolding activity of isoform 1. Overexpression promotes the development of heart hypertrophy. Contributes to the regulation of dendritic spine morphogenesis in neurons. May be required to restrain postsynaptic growth of excitatory synapses. Isoform 1, but not isoform 2, expression favors spine thinning and elongation. This chain is PDZ and LIM domain protein 5, found in Mus musculus (Mouse).